Consider the following 120-residue polypeptide: Large ribosomal subunit protein uL18c (120 aa).

This sequence belongs to the universal ribosomal protein uL18 family. As to quaternary structure, part of the 50S ribosomal subunit; contacts the 5S rRNA.

Its subcellular location is the plastid. It localises to the chloroplast. Its function is as follows. Binds 5S rRNA, forms part of the central protuberance of the 50S subunit. The chain is Large ribosomal subunit protein uL18c (rpl18) from Porphyra purpurea (Red seaweed).